The chain runs to 395 residues: Ketoisovalerate oxidoreductase subunit VorA (395 aa).

As to quaternary structure, heterotetramer of one alpha, one beta, one delta and one gamma chain.

It carries out the reaction 3-methyl-2-oxobutanoate + 2 oxidized [2Fe-2S]-[ferredoxin] + CoA = 2-methylpropanoyl-CoA + 2 reduced [2Fe-2S]-[ferredoxin] + CO2 + H(+). The sequence is that of Ketoisovalerate oxidoreductase subunit VorA (vorA) from Pyrococcus abyssi (strain GE5 / Orsay).